Here is a 264-residue protein sequence, read N- to C-terminus: TLC domain-containing protein 2 (264 aa).

6 consecutive transmembrane segments (helical) span residues Pro3–Leu23, Leu42–Leu62, Trp77–Leu97, Val114–Val134, Ser169–Phe189, and Leu199–Ile219. In terms of domain architecture, TLC spans Arg34–Leu227. Residues Arg230–Asp264 form a disordered region. Over residues Gly237–Asn250 the composition is skewed to basic and acidic residues. Residues Pro252–Asp264 show a composition bias toward polar residues.

It belongs to the TLCD family.

It is found in the cell membrane. Regulates the composition and fluidity of the plasma membrane. Inhibits the incorporation of membrane-fluidizing phospholipids containing omega-3 long-chain polyunsaturated fatty acids (LCPUFA) and thereby promotes membrane rigidity. Does not appear to have any effect on LCPUFA synthesis. The protein is TLC domain-containing protein 2 (TLCD2) of Homo sapiens (Human).